Reading from the N-terminus, the 389-residue chain is Large ribosomal subunit protein uL3 (389 aa).

This sequence belongs to the universal ribosomal protein uL3 family. As to quaternary structure, component of the large ribosomal subunit. Mature ribosomes consist of a small (40S) and a large (60S) subunit. The 40S subunit contains about 32 different proteins and 1 molecule of RNA (18S). The 60S subunit contains 45 different proteins and 3 molecules of RNA (25S, 5.8S and 5S).

It localises to the cytoplasm. Component of the ribosome, a large ribonucleoprotein complex responsible for the synthesis of proteins in the cell. The small ribosomal subunit (SSU) binds messenger RNAs (mRNAs) and translates the encoded message by selecting cognate aminoacyl-transfer RNA (tRNA) molecules. The large subunit (LSU) contains the ribosomal catalytic site termed the peptidyl transferase center (PTC), which catalyzes the formation of peptide bonds, thereby polymerizing the amino acids delivered by tRNAs into a polypeptide chain. The nascent polypeptides leave the ribosome through a tunnel in the LSU and interact with protein factors that function in enzymatic processing, targeting, and the membrane insertion of nascent chains at the exit of the ribosomal tunnel. RPL3 plays a role in coordinating processes of accommodating the aminoacyl-tRNA in the PTC. This chain is Large ribosomal subunit protein uL3, found in Candida albicans (strain SC5314 / ATCC MYA-2876) (Yeast).